A 125-amino-acid chain; its full sequence is MSTAVTEGIEVTVRSTFRPERSEPGRFLFSYTVRIANQGEVPAQLVSRRWIILDASGEREEVVGDGVVGQQPHLEPGEHFEYTSFCVLKTPHGSMRGTYRMVRDDGQAFDATIAPFPLVVPGSLN.

Residues 3-125 (TAVTEGIEVT…FPLVVPGSLN (123 aa)) enclose the ApaG domain.

This chain is Protein ApaG, found in Anaeromyxobacter dehalogenans (strain 2CP-1 / ATCC BAA-258).